Here is a 383-residue protein sequence, read N- to C-terminus: Sterol 24-C-methyltransferase ERG6 (383 aa).

An N-acetylserine modification is found at serine 2. Serine 99 is modified (phosphoserine).

This sequence belongs to the class I-like SAM-binding methyltransferase superfamily. Erg6/SMT family. In terms of assembly, interacts with ERG28.

Its subcellular location is the microsome. It is found in the mitochondrion. The enzyme catalyses zymosterol + S-adenosyl-L-methionine = fecosterol + S-adenosyl-L-homocysteine + H(+). It functions in the pathway steroid metabolism; ergosterol biosynthesis; ergosterol from zymosterol: step 1/5. Sterol 24-C-methyltransferase; part of the third module of ergosterol biosynthesis pathway that includes the late steps of the pathway. ERG6 catalyzes the methyl transfer from S-adenosyl-methionine to the C-24 of zymosterol to form fecosterol. The third module or late pathway involves the ergosterol synthesis itself through consecutive reactions that mainly occur in the endoplasmic reticulum (ER) membrane. Firstly, the squalene synthase ERG9 catalyzes the condensation of 2 farnesyl pyrophosphate moieties to form squalene, which is the precursor of all steroids. Squalene synthase is crucial for balancing the incorporation of farnesyl diphosphate (FPP) into sterol and nonsterol isoprene synthesis. Secondly, the squalene epoxidase ERG1 catalyzes the stereospecific oxidation of squalene to (S)-2,3-epoxysqualene, which is considered to be a rate-limiting enzyme in steroid biosynthesis. Then, the lanosterol synthase ERG7 catalyzes the cyclization of (S)-2,3 oxidosqualene to lanosterol, a reaction that forms the sterol core. In the next steps, lanosterol is transformed to zymosterol through a complex process involving various demethylation, reduction and desaturation reactions. The lanosterol 14-alpha-demethylase ERG11 (also known as CYP51) catalyzes C14-demethylation of lanosterol to produce 4,4'-dimethyl cholesta-8,14,24-triene-3-beta-ol, which is critical for ergosterol biosynthesis. The C-14 reductase ERG24 reduces the C14=C15 double bond of 4,4-dimethyl-cholesta-8,14,24-trienol to produce 4,4-dimethyl-cholesta-8,24-dienol. 4,4-dimethyl-cholesta-8,24-dienol is substrate of the C-4 demethylation complex ERG25-ERG26-ERG27 in which ERG25 catalyzes the three-step monooxygenation required for the demethylation of 4,4-dimethyl and 4alpha-methylsterols, ERG26 catalyzes the oxidative decarboxylation that results in a reduction of the 3-beta-hydroxy group at the C-3 carbon to an oxo group, and ERG27 is responsible for the reduction of the keto group on the C-3. ERG28 has a role as a scaffold to help anchor ERG25, ERG26 and ERG27 to the endoplasmic reticulum and ERG29 regulates the activity of the iron-containing C4-methylsterol oxidase ERG25. Then, the sterol 24-C-methyltransferase ERG6 catalyzes the methyl transfer from S-adenosyl-methionine to the C-24 of zymosterol to form fecosterol. The C-8 sterol isomerase ERG2 catalyzes the reaction which results in unsaturation at C-7 in the B ring of sterols and thus converts fecosterol to episterol. The sterol-C5-desaturase ERG3 then catalyzes the introduction of a C-5 double bond in the B ring to produce 5-dehydroepisterol. The C-22 sterol desaturase ERG5 further converts 5-dehydroepisterol into ergosta-5,7,22,24(28)-tetraen-3beta-ol by forming the C-22(23) double bond in the sterol side chain. Finally, ergosta-5,7,22,24(28)-tetraen-3beta-ol is substrate of the C-24(28) sterol reductase ERG4 to produce ergosterol. The protein is Sterol 24-C-methyltransferase ERG6 of Saccharomyces cerevisiae (strain ATCC 204508 / S288c) (Baker's yeast).